Here is a 260-residue protein sequence, read N- to C-terminus: Small ribosomal subunit protein cS22 (260 aa).

The N-terminal 62 residues, 1–62, are a transit peptide targeting the chloroplast; it reads MATISSILPC…TNPPLLKVRA (62 aa). A compositionally biased stretch (low complexity) spans 63–78; sequence VVTEETSSSSTASSSS. The segment at 63 to 83 is disordered; that stretch reads VVTEETSSSSTASSSSDGEGA. RRM domains lie at 84 to 162 and 184 to 260; these read RRLY…ITEK and YKVY…VNKA.

Component of the chloroplast small ribosomal subunit (SSU). Mature 70S chloroplast ribosomes of higher plants consist of a small (30S) and a large (50S) subunit. The 30S small subunit contains 1 molecule of ribosomal RNA (16S rRNA) and 24 different proteins. The 50S large subunit contains 3 rRNA molecules (23S, 5S and 4.5S rRNA) and 33 different proteins.

The protein localises to the plastid. It localises to the chloroplast. Its function is as follows. Component of the chloroplast ribosome (chloro-ribosome), a dedicated translation machinery responsible for the synthesis of chloroplast genome-encoded proteins, including proteins of the transcription and translation machinery and components of the photosynthetic apparatus. cS22 may have a role in the recruitment of stored chloroplast mRNAs for active protein synthesis. This Spinacia oleracea (Spinach) protein is Small ribosomal subunit protein cS22 (PSRP2).